The primary structure comprises 417 residues: Gamma-glutamyl phosphate reductase (417 aa).

This sequence belongs to the gamma-glutamyl phosphate reductase family.

It localises to the cytoplasm. The catalysed reaction is L-glutamate 5-semialdehyde + phosphate + NADP(+) = L-glutamyl 5-phosphate + NADPH + H(+). The protein operates within amino-acid biosynthesis; L-proline biosynthesis; L-glutamate 5-semialdehyde from L-glutamate: step 2/2. Functionally, catalyzes the NADPH-dependent reduction of L-glutamate 5-phosphate into L-glutamate 5-semialdehyde and phosphate. The product spontaneously undergoes cyclization to form 1-pyrroline-5-carboxylate. The sequence is that of Gamma-glutamyl phosphate reductase from Cronobacter sakazakii (strain ATCC BAA-894) (Enterobacter sakazakii).